The sequence spans 403 residues: GPI-N-acetylgalactosamine transferase PGAP4 (403 aa).

Topologically, residues 1–22 (MSTSTSPAAMLLRRLRRLSWGS) are cytoplasmic. A helical membrane pass occupies residues 23-43 (TAVQLFILTVVTFGLLAPLAC). Topologically, residues 44-259 (HRLLHSYFYL…RLQHYTNPEP (216 aa)) are lumenal. Valine 109 lines the UDP-N-acetyl-alpha-D-galactosamine pocket. Disulfide bonds link cysteine 132-cysteine 136 and cysteine 144-cysteine 194. Positions 211–213 (EDD) match the DXD motif motif. A helical transmembrane segment spans residues 260 to 280 (MRILEWVGVGMLLGPLLTWIY). Residues 281 to 287 (MRFASRP) lie on the Cytoplasmic side of the membrane. Residues 288–308 (GFSWPVMLFFSLYSMGLVELV) form a helical membrane-spanning segment. Residues 309–403 (GRHYFLELRR…LRYNFHPSLL (95 aa)) are Lumenal-facing. Cysteines 332 and 333 form a disulfide. UDP-N-acetyl-alpha-D-galactosamine-binding residues include threonine 334, proline 335, and lysine 362.

This sequence belongs to the PGAP4 family. In terms of processing, glycosylated.

It localises to the golgi apparatus membrane. In terms of biological role, golgi-resident glycosylphosphatidylinositol (GPI)-N-acetylgalactosamine transferase that catalyzes the N-acetyl-beta-D-galactosamine transfer from an UDP-N-acetyl-alpha-D-galactosamine to the 4-OH-position of first mannose of the glycosylphosphatidylinositol (GPI) of a GPI-anchored protein (GPI-AP). This modification occurs after the fatty acid remodeling step of the GPI-anchor maturation. The chain is GPI-N-acetylgalactosamine transferase PGAP4 from Pongo abelii (Sumatran orangutan).